A 326-amino-acid polypeptide reads, in one-letter code: N-acetyl-gamma-glutamyl-phosphate reductase (326 aa).

Cysteine 155 is an active-site residue.

The protein belongs to the NAGSA dehydrogenase family. Type 1 subfamily.

It localises to the cytoplasm. It carries out the reaction N-acetyl-L-glutamate 5-semialdehyde + phosphate + NADP(+) = N-acetyl-L-glutamyl 5-phosphate + NADPH + H(+). It participates in amino-acid biosynthesis; L-arginine biosynthesis; N(2)-acetyl-L-ornithine from L-glutamate: step 3/4. In terms of biological role, catalyzes the NADPH-dependent reduction of N-acetyl-5-glutamyl phosphate to yield N-acetyl-L-glutamate 5-semialdehyde. The chain is N-acetyl-gamma-glutamyl-phosphate reductase from Shewanella denitrificans (strain OS217 / ATCC BAA-1090 / DSM 15013).